Reading from the N-terminus, the 54-residue chain is Large ribosomal subunit protein bL33 (54 aa).

This sequence belongs to the bacterial ribosomal protein bL33 family.

The polypeptide is Large ribosomal subunit protein bL33 (Corynebacterium diphtheriae (strain ATCC 700971 / NCTC 13129 / Biotype gravis)).